The chain runs to 695 residues: UvrABC system protein B (695 aa).

In terms of domain architecture, Helicase ATP-binding spans 31–414; the sequence is EGIESGLSFQ…EIQRSGQIAE (384 aa). An ATP-binding site is contributed by 44–51; sequence GVTGSGKT. Positions 97–120 match the Beta-hairpin motif; that stretch reads YYDYYQPEAYVPSRDLFIEKDSSI. The region spanning 435 to 601 is the Helicase C-terminal domain; sequence QVDDLMSEVS…GVNKRIKDLI (167 aa). Residues 632–667 form the UVR domain; sequence AKEIQRLEKSMLEAARNMEFEQAAQYRDEIKNLRSK.

The protein belongs to the UvrB family. Forms a heterotetramer with UvrA during the search for lesions. Interacts with UvrC in an incision complex.

It localises to the cytoplasm. The UvrABC repair system catalyzes the recognition and processing of DNA lesions. A damage recognition complex composed of 2 UvrA and 2 UvrB subunits scans DNA for abnormalities. Upon binding of the UvrA(2)B(2) complex to a putative damaged site, the DNA wraps around one UvrB monomer. DNA wrap is dependent on ATP binding by UvrB and probably causes local melting of the DNA helix, facilitating insertion of UvrB beta-hairpin between the DNA strands. Then UvrB probes one DNA strand for the presence of a lesion. If a lesion is found the UvrA subunits dissociate and the UvrB-DNA preincision complex is formed. This complex is subsequently bound by UvrC and the second UvrB is released. If no lesion is found, the DNA wraps around the other UvrB subunit that will check the other stand for damage. The polypeptide is UvrABC system protein B (Nitrosomonas europaea (strain ATCC 19718 / CIP 103999 / KCTC 2705 / NBRC 14298)).